Here is a 139-residue protein sequence, read N- to C-terminus: ATP synthase epsilon chain (139 aa).

It belongs to the ATPase epsilon chain family. As to quaternary structure, F-type ATPases have 2 components, CF(1) - the catalytic core - and CF(0) - the membrane proton channel. CF(1) has five subunits: alpha(3), beta(3), gamma(1), delta(1), epsilon(1). CF(0) has three main subunits: a, b and c.

The protein resides in the cell inner membrane. Functionally, produces ATP from ADP in the presence of a proton gradient across the membrane. This is ATP synthase epsilon chain from Acinetobacter baumannii (strain AB307-0294).